Here is a 118-residue protein sequence, read N- to C-terminus: Large ribosomal subunit protein uL18 (118 aa).

Belongs to the universal ribosomal protein uL18 family. As to quaternary structure, part of the 50S ribosomal subunit; part of the 5S rRNA/L5/L18/L25 subcomplex. Contacts the 5S and 23S rRNAs.

In terms of biological role, this is one of the proteins that bind and probably mediate the attachment of the 5S RNA into the large ribosomal subunit, where it forms part of the central protuberance. This is Large ribosomal subunit protein uL18 from Levilactobacillus brevis (strain ATCC 367 / BCRC 12310 / CIP 105137 / JCM 1170 / LMG 11437 / NCIMB 947 / NCTC 947) (Lactobacillus brevis).